Reading from the N-terminus, the 477-residue chain is Delayed-rectifier potassium channel regulatory subunit KCNS2 (477 aa).

The Cytoplasmic portion of the chain corresponds to 1–184 (MTGQSLWDVS…LALDNPGYSV (184 aa)). Residues 185–206 (LSRVFSILSILVVMGSIITMCL) traverse the membrane as a helical segment. The Extracellular segment spans residues 207–225 (NSLPDFQIPDSQGNPGEDP). Residues 226–248 (RFEIVEHFGIAWFTFELVARFAV) traverse the membrane as a helical segment. At 249-259 (APDFLKFFKNA) the chain is on the cytoplasmic side. The helical transmembrane segment at 260–280 (LNLIDLMSIVPFYITLVVNLV) threads the bilayer. Residues 281 to 290 (VESTPTLANL) are Extracellular-facing. Residues 291-311 (GRVAQVLRLMRIFRILKLARH) traverse the membrane as a helical; Voltage-sensor segment. Over 312-326 (STGLRSLGATLKYSY) the chain is Cytoplasmic. Residues 327–348 (KEVGLLLLYLSVGISIFSVVAY) form a helical membrane-spanning segment. Over 349–361 (TIEKEENEGLATI) the chain is Extracellular. Positions 362-373 (PACWWWATVSMT) form an intramembrane region, helical. The Selectivity filter signature appears at 374 to 379 (TVGYGD). The stretch at 374-381 (TVGYGDVV) is an intramembrane region. Topologically, residues 382 to 388 (PGTTAGK) are extracellular. Residues 389 to 417 (LTASACILAGILVVVLPITLIFNKFSHFY) form a helical membrane-spanning segment. Residues 418-477 (RRQKQLESAMRSCDFGDGMKEVPSVNLRDYYAHKVKSLMASLTNMSRSSPSELSLNDSLR) lie on the Cytoplasmic side of the membrane.

It belongs to the potassium channel family. S (TC 1.A.1.2) subfamily. Kv9.2/KCNS2 sub-subfamily. Heterotetramer with KCNB1 and KCNB2. Does not form homomultimers.

The protein resides in the cell membrane. Functionally, potassium channel regulatory subunit that modulate the delayed rectifier voltage-gated potassium channel activity of KCNB1 and KCNB2 by altering their kinetics, expression levels, and shifting the half-inactivation potential to more polarized values. While it does not form functional channels on its own, it can form functional heterotetrameric channels with KCNB1 and KCNB2. Each regulatory subunit has unique regulatory properties that can lead to extensive inhibition, significant changes in kinetics, and/or substantial shifts in the voltage dependencies of the inactivation process. The chain is Delayed-rectifier potassium channel regulatory subunit KCNS2 from Homo sapiens (Human).